Here is a 741-residue protein sequence, read N- to C-terminus: MSFTNATFSQVLDDLSARFILNLPAEEQSSVERLCFQIEQAHWFYEDFIRAQNDQLPSLGLRVFSAKLFAHCPLLWKWSKVHEEAFDDFLRYKTRIPVRGAIMLDMSMQQCVLVKGWKASSGWGFPKGKIDKDESDVDCAIREVYEETGFDCSSRINPNEFIDMTIRGQNVRLYIIPGISLDTRFESRTRKEISKIEWHNLMDLPTFKKNKPQTMKNKFYMVIPFLAPLKKWIKKRNIANNTTKEKNISVDVDADASSQLLSLLKSSTAPSDLATPQPSTFPQPPVESHSSFDIKQKILHLLNEGNEPKSPIQLPPVSNLPLNPPIQSSNSRLSHDNNSFDPFAYLGLDPKNPSASFPRVVSQNNMLTNKPVLNNHFQQSMYSNLLKDQNSVQHLFAASDMPSPMELPSPSTVYHQVFYPPTSTSVSSYGLGKTPQPAYGSSSPYVNGHQTQQISSLPPFQSQTQFLARNSDNSGQSYNSEGDSNSKRLLSMLSQQDTTPSSSTLSKEANVQLANLFLTPNSLETKKFSDNSQGEEISDNLHGESCNNPNANSVHSAQLLQALLHPSATETKEETPKKTSDSLSLLTLLKSGLPTPANDLQNKSQNNERKASSQVKELEVKNYSKSTDLLKKTLRIPRNDEPLEAANQFDLLKVSPQQKSEVPPKRNELSQSKLKNRKKKENSETNKNHVDMSPGFVKILKRSPLADQKKEDTQESDFKGSDDHFLSYLQSVVSSNSNGLH.

The interval 1–243 (MSFTNATFSQ…KKRNIANNTT (243 aa)) is interaction with pdc1. One can recognise a Nudix hydrolase domain in the interval 94–227 (TRIPVRGAIM…KFYMVIPFLA (134 aa)). The short motif at 128–149 (GKIDKDESDVDCAIREVYEETG) is the Nudix box element. 2 residues coordinate ATP: Arg-167 and Tyr-220. Composition is skewed to polar residues over residues 268–278 (TAPSDLATPQP) and 439–453 (YGSS…QTQQ). 5 disordered regions span residues 268-289 (TAPS…VESH), 425-453 (SVSS…QTQQ), 525-552 (TKKF…PNAN), 592-616 (GLPT…SQVK), and 654-721 (VSPQ…FKGS). 3 stretches are compositionally biased toward basic and acidic residues: residues 606-616 (NNERKASSQVK), 681-690 (ENSETNKNHV), and 707-721 (DQKK…FKGS).

This sequence belongs to the Nudix hydrolase family. DCP2 subfamily. Component of the decapping complex composed of dcp1 and dcp2. Interacts with edc3. Interacts with pdc1; via N-terminus. Interacts with pdc2. It depends on Mn(2+) as a cofactor.

It localises to the cytoplasm. Its subcellular location is the P-body. Functionally, catalytic component of the decapping complex necessary for the degradation of mRNAs, both in normal mRNA turnover and in nonsense-mediated mRNA decay. Removes the 7-methyl guanine cap structure from mRNA molecules, yielding a 5'-phosphorylated mRNA fragment and 7m-GDP. Decapping is the major pathway of mRNA degradation in yeast. It occurs through deadenylation, decapping and subsequent 5' to 3' exonucleolytic decay of the transcript body. The polypeptide is mRNA decapping complex subunit 2 (dcp2) (Schizosaccharomyces pombe (strain 972 / ATCC 24843) (Fission yeast)).